Consider the following 182-residue polypeptide: Dirigent protein 5 (182 aa).

The signal sequence occupies residues 1-23; that stretch reads MVGQMKSFLFLFVFLVLTKTVIS. A disulfide bridge connects residues Cys-35 and Cys-181. N-linked (GlcNAc...) asparagine glycosylation is found at Asn-54 and Asn-118.

Belongs to the plant dirigent protein family. In terms of assembly, homodimer. As to expression, confined to shoot meristem, vascular region of cotyledons and siliques abscission zone.

It is found in the secreted. It localises to the extracellular space. Its subcellular location is the apoplast. Dirigent proteins impart stereoselectivity on the phenoxy radical-coupling reaction, yielding optically active lignans from two molecules of coniferyl alcohol in the biosynthesis of lignans, flavonolignans, and alkaloids and thus plays a central role in plant secondary metabolism. Enantiocomplementary dirigent protein that mediates the laccase-catalyzed enantioselective oxidative phenol coupling of (E)-coniferyl alcohol to (-)-pinoresinol. This chain is Dirigent protein 5 (DIR5), found in Arabidopsis thaliana (Mouse-ear cress).